Consider the following 308-residue polypeptide: Ribosomal RNA large subunit methyltransferase F (308 aa).

Belongs to the methyltransferase superfamily. METTL16/RlmF family.

It localises to the cytoplasm. It catalyses the reaction adenosine(1618) in 23S rRNA + S-adenosyl-L-methionine = N(6)-methyladenosine(1618) in 23S rRNA + S-adenosyl-L-homocysteine + H(+). Specifically methylates the adenine in position 1618 of 23S rRNA. The protein is Ribosomal RNA large subunit methyltransferase F of Shigella dysenteriae serotype 1 (strain Sd197).